We begin with the raw amino-acid sequence, 345 residues long: Holliday junction branch migration complex subunit RuvB (345 aa).

The large ATPase domain (RuvB-L) stretch occupies residues 4 to 185 (TDRLIAPSTQ…FGIVSRLEFY (182 aa)). ATP is bound by residues Leu24, Arg25, Gly66, Lys69, Thr70, Thr71, 132–134 (EDY), Arg175, Tyr185, and Arg222. Mg(2+) is bound at residue Thr70. Residues 186-256 (TADELARIVH…IADAALKMLD (71 aa)) form a small ATPAse domain (RuvB-S) region. The head domain (RuvB-H) stretch occupies residues 259 to 345 (KLGFDVMDRK…KIGTGELWQQ (87 aa)). The DNA site is built by Arg295, Arg314, and Arg319.

It belongs to the RuvB family. Homohexamer. Forms an RuvA(8)-RuvB(12)-Holliday junction (HJ) complex. HJ DNA is sandwiched between 2 RuvA tetramers; dsDNA enters through RuvA and exits via RuvB. An RuvB hexamer assembles on each DNA strand where it exits the tetramer. Each RuvB hexamer is contacted by two RuvA subunits (via domain III) on 2 adjacent RuvB subunits; this complex drives branch migration. In the full resolvosome a probable DNA-RuvA(4)-RuvB(12)-RuvC(2) complex forms which resolves the HJ.

It localises to the cytoplasm. The catalysed reaction is ATP + H2O = ADP + phosphate + H(+). Its function is as follows. The RuvA-RuvB-RuvC complex processes Holliday junction (HJ) DNA during genetic recombination and DNA repair, while the RuvA-RuvB complex plays an important role in the rescue of blocked DNA replication forks via replication fork reversal (RFR). RuvA specifically binds to HJ cruciform DNA, conferring on it an open structure. The RuvB hexamer acts as an ATP-dependent pump, pulling dsDNA into and through the RuvAB complex. RuvB forms 2 homohexamers on either side of HJ DNA bound by 1 or 2 RuvA tetramers; 4 subunits per hexamer contact DNA at a time. Coordinated motions by a converter formed by DNA-disengaged RuvB subunits stimulates ATP hydrolysis and nucleotide exchange. Immobilization of the converter enables RuvB to convert the ATP-contained energy into a lever motion, pulling 2 nucleotides of DNA out of the RuvA tetramer per ATP hydrolyzed, thus driving DNA branch migration. The RuvB motors rotate together with the DNA substrate, which together with the progressing nucleotide cycle form the mechanistic basis for DNA recombination by continuous HJ branch migration. Branch migration allows RuvC to scan DNA until it finds its consensus sequence, where it cleaves and resolves cruciform DNA. The protein is Holliday junction branch migration complex subunit RuvB of Methylobacillus flagellatus (strain ATCC 51484 / DSM 6875 / VKM B-1610 / KT).